The sequence spans 509 residues: tRNA-2-methylthio-N(6)-dimethylallyladenosine synthase (509 aa).

A disordered region spans residues 1-20 (MNEKQKQESGQVNPADKTSE). Residues 66–184 (RKFYIRTYGC…LPELLSEAYL (119 aa)) enclose the MTTase N-terminal domain. [4Fe-4S] cluster is bound by residues cysteine 75, cysteine 111, cysteine 145, cysteine 221, cysteine 225, and cysteine 228. The Radical SAM core domain maps to 207–437 (RNGKIKGWVN…NDLVKEISAK (231 aa)). The TRAM domain maps to 440-503 (KEYEGRTVEV…TWSLDGVMAG (64 aa)).

Belongs to the methylthiotransferase family. MiaB subfamily. As to quaternary structure, monomer. Requires [4Fe-4S] cluster as cofactor.

The protein localises to the cytoplasm. The catalysed reaction is N(6)-dimethylallyladenosine(37) in tRNA + (sulfur carrier)-SH + AH2 + 2 S-adenosyl-L-methionine = 2-methylsulfanyl-N(6)-dimethylallyladenosine(37) in tRNA + (sulfur carrier)-H + 5'-deoxyadenosine + L-methionine + A + S-adenosyl-L-homocysteine + 2 H(+). Its function is as follows. Catalyzes the methylthiolation of N6-(dimethylallyl)adenosine (i(6)A), leading to the formation of 2-methylthio-N6-(dimethylallyl)adenosine (ms(2)i(6)A) at position 37 in tRNAs that read codons beginning with uridine. The protein is tRNA-2-methylthio-N(6)-dimethylallyladenosine synthase of Bacillus velezensis (strain DSM 23117 / BGSC 10A6 / LMG 26770 / FZB42) (Bacillus amyloliquefaciens subsp. plantarum).